A 65-amino-acid chain; its full sequence is Large ribosomal subunit protein bL35 (65 aa).

Positions 1 to 47 are disordered; sequence MPKIKTNRGAAKRFRKTASGKIKRNSAFTSHILTSKTRKRKRQLRSS. Basic residues predominate over residues 10–24; the sequence is AAKRFRKTASGKIKR. The span at 26–35 shows a compositional bias: polar residues; the sequence is SAFTSHILTS.

Belongs to the bacterial ribosomal protein bL35 family.

In Geobacter metallireducens (strain ATCC 53774 / DSM 7210 / GS-15), this protein is Large ribosomal subunit protein bL35.